Reading from the N-terminus, the 196-residue chain is Peptidyl-tRNA hydrolase (196 aa).

Tyr-18 contributes to the tRNA binding site. The active-site Proton acceptor is His-23. Phe-69, Asn-71, and Asn-117 together coordinate tRNA.

This sequence belongs to the PTH family. In terms of assembly, monomer.

Its subcellular location is the cytoplasm. The enzyme catalyses an N-acyl-L-alpha-aminoacyl-tRNA + H2O = an N-acyl-L-amino acid + a tRNA + H(+). In terms of biological role, hydrolyzes ribosome-free peptidyl-tRNAs (with 1 or more amino acids incorporated), which drop off the ribosome during protein synthesis, or as a result of ribosome stalling. Functionally, catalyzes the release of premature peptidyl moieties from peptidyl-tRNA molecules trapped in stalled 50S ribosomal subunits, and thus maintains levels of free tRNAs and 50S ribosomes. The chain is Peptidyl-tRNA hydrolase from Vibrio parahaemolyticus serotype O3:K6 (strain RIMD 2210633).